The sequence spans 340 residues: Mitotic checkpoint protein BUB3.1 (340 aa).

The disordered stretch occupies residues 1–20; it reads MTTVTPSAGRELSNPPSDGI. WD repeat units lie at residues 15 to 54, 96 to 135, 142 to 179, 239 to 278, and 281 to 324; these read PPSD…LKGE, THDK…GPER, LQPE…QPEQ, DIVY…RLYQ, and KYPT…RSVN.

This sequence belongs to the WD repeat BUB3 family. Part of the mitotic checkpoint complex (MCC); interacts with CDC20-1 and CDC20-2. Interacts with MAD2 and BUBR1. In terms of tissue distribution, expressed in actively dividing tissues, early in organ development, in young leaves, lateral root primordia and root meristems, flower buds, flowers and siliques.

The protein resides in the nucleus. It is found in the chromosome. Its subcellular location is the centromere. It localises to the kinetochore. The protein localises to the cytoplasm. The protein resides in the cytoskeleton. It is found in the phragmoplast. Its subcellular location is the spindle. Functionally, has a dual function in spindle-assembly checkpoint signaling and in promoting the establishment of correct kinetochore-microtubule (K-MT) attachments. Promotes the formation of stable end-on bipolar attachments. Necessary for kinetochore localization of BUB1. The BUB1/BUB3 complex plays a role in the inhibition of anaphase-promoting complex or cyclosome (APC/C) when spindle-assembly checkpoint is activated and inhibits the ubiquitin ligase activity of APC/C by phosphorylating its activator CDC20. Essential for gametophyte development. This Arabidopsis thaliana (Mouse-ear cress) protein is Mitotic checkpoint protein BUB3.1 (BUB3.1).